A 363-amino-acid chain; its full sequence is DNA repair protein rlp1 (363 aa).

This sequence belongs to the RecA family. RAD51 subfamily. In terms of assembly, interacts with rdl1 and sws1.

The protein localises to the cytoplasm. It localises to the nucleus. Functionally, required for normal levels of meiotic recombination. Acts in the recombinational pathway of double-strand break (DSB) repair together with rhp51, rhp55 and rad22. Required for the full extent of DNA recombination and cell survival under condition of a replication fork collapse. This chain is DNA repair protein rlp1, found in Schizosaccharomyces pombe (strain 972 / ATCC 24843) (Fission yeast).